A 421-amino-acid polypeptide reads, in one-letter code: 3-isopropylmalate dehydratase large subunit (421 aa).

Residues C300, C360, and C363 each contribute to the [4Fe-4S] cluster site.

This sequence belongs to the aconitase/IPM isomerase family. LeuC type 2 subfamily. Heterodimer of LeuC and LeuD. [4Fe-4S] cluster serves as cofactor.

The enzyme catalyses (2R,3S)-3-isopropylmalate = (2S)-2-isopropylmalate. It functions in the pathway amino-acid biosynthesis; L-leucine biosynthesis; L-leucine from 3-methyl-2-oxobutanoate: step 2/4. Catalyzes the isomerization between 2-isopropylmalate and 3-isopropylmalate, via the formation of 2-isopropylmaleate. The protein is 3-isopropylmalate dehydratase large subunit of Thermodesulfovibrio yellowstonii (strain ATCC 51303 / DSM 11347 / YP87).